We begin with the raw amino-acid sequence, 171 residues long: NADH-quinone oxidoreductase subunit I 1 (171 aa).

4Fe-4S ferredoxin-type domains follow at residues 41 to 71 (LSRD…LQAT) and 81 to 110 (EFFR…LTPD). Cysteine 51, cysteine 54, cysteine 57, cysteine 61, cysteine 90, cysteine 93, cysteine 96, and cysteine 100 together coordinate [4Fe-4S] cluster.

Belongs to the complex I 23 kDa subunit family. In terms of assembly, NDH-1 is composed of 14 different subunits. Subunits NuoA, H, J, K, L, M, N constitute the membrane sector of the complex. [4Fe-4S] cluster serves as cofactor.

Its subcellular location is the cell inner membrane. The enzyme catalyses a quinone + NADH + 5 H(+)(in) = a quinol + NAD(+) + 4 H(+)(out). In terms of biological role, NDH-1 shuttles electrons from NADH, via FMN and iron-sulfur (Fe-S) centers, to quinones in the respiratory chain. The immediate electron acceptor for the enzyme in this species is believed to be ubiquinone. Couples the redox reaction to proton translocation (for every two electrons transferred, four hydrogen ions are translocated across the cytoplasmic membrane), and thus conserves the redox energy in a proton gradient. The protein is NADH-quinone oxidoreductase subunit I 1 of Nitrosospira multiformis (strain ATCC 25196 / NCIMB 11849 / C 71).